The sequence spans 256 residues: NAD-dependent protein deacylase 2 (256 aa).

Residues 1-256 (MDSHSPIATV…MPQVVSHIYR (256 aa)) form the Deacetylase sirtuin-type domain. NAD(+) contacts are provided by residues 25 to 44 (GAGLSADSGMPTYRGLGGLY) and 108 to 111 (QNID). H128 acts as the Proton acceptor in catalysis. Zn(2+) is bound by residues C136, C139, C158, and C161. NAD(+) is bound by residues 199-201 (GTT), 225-227 (NPG), and A243.

The protein belongs to the sirtuin family. Class III subfamily. Zn(2+) serves as cofactor.

It localises to the cytoplasm. The catalysed reaction is N(6)-acetyl-L-lysyl-[protein] + NAD(+) + H2O = 2''-O-acetyl-ADP-D-ribose + nicotinamide + L-lysyl-[protein]. Functionally, NAD-dependent protein deacetylase which modulates the activities of several proteins which are inactive in their acetylated form. The protein is NAD-dependent protein deacylase 2 (cobB2) of Pseudomonas aeruginosa (strain ATCC 15692 / DSM 22644 / CIP 104116 / JCM 14847 / LMG 12228 / 1C / PRS 101 / PAO1).